Reading from the N-terminus, the 438-residue chain is Enolase (438 aa).

Substrate is bound by residues His159 and Glu168. Glu211 (proton donor) is an active-site residue. Mg(2+) contacts are provided by Asp246, Glu297, and Asp322. Residues Glu297 and Asp322 each contribute to the substrate site. Lys347 functions as the Proton acceptor in the catalytic mechanism. Residues 374-377 and Lys398 each bind substrate; that span reads SHRS.

It belongs to the enolase family. In terms of assembly, homodimer. It depends on Mg(2+) as a cofactor.

It localises to the cytoplasm. The catalysed reaction is (2R)-2-phosphoglycerate = phosphoenolpyruvate + H2O. It functions in the pathway carbohydrate degradation; glycolysis; pyruvate from D-glyceraldehyde 3-phosphate: step 4/5. In terms of biological role, involved in osmoadaptation. This chain is Enolase (enoA), found in Emericella nidulans (strain FGSC A4 / ATCC 38163 / CBS 112.46 / NRRL 194 / M139) (Aspergillus nidulans).